We begin with the raw amino-acid sequence, 185 residues long: Ion-translocating oxidoreductase complex subunit B (185 aa).

The interval 1–26 is hydrophobic; sequence MNHILLIILIFAALALIFGLLLGFAA. The 4Fe-4S domain occupies 32 to 90; the sequence is ESDPIVDQLDALLPQTQCGQCGYPGCRPYAEAIANGDSINKCVPGGAQTIQNIADLMGV. [4Fe-4S] cluster is bound by residues C49, C52, C57, C73, C115, C118, C121, C125, C145, C148, C151, and C155. 2 4Fe-4S ferredoxin-type domains span residues 106-135 and 136-165; these read RVAFIHENLCIGCTKCIQACPVDAIIGAPK and LMHTILRSECTGCDLCVDPCPTNCIEMIEL.

This sequence belongs to the 4Fe4S bacterial-type ferredoxin family. RnfB subfamily. In terms of assembly, the complex is composed of six subunits: RnfA, RnfB, RnfC, RnfD, RnfE and RnfG. It depends on [4Fe-4S] cluster as a cofactor.

It localises to the cell inner membrane. In terms of biological role, part of a membrane-bound complex that couples electron transfer with translocation of ions across the membrane. This Tolumonas auensis (strain DSM 9187 / NBRC 110442 / TA 4) protein is Ion-translocating oxidoreductase complex subunit B.